The sequence spans 31 residues: SISCGESCVYIPCTVTALVGCTCKDKVCYLN.

A cross-link (cyclopeptide (Ser-Asn)) is located at residues 1–31 (SISCGESCVYIPCTVTALVGCTCKDKVCYLN). 3 disulfides stabilise this stretch: cysteine 4-cysteine 21, cysteine 8-cysteine 23, and cysteine 13-cysteine 28.

The protein belongs to the cyclotide family. Bracelet subfamily. Post-translationally, this is a cyclic peptide.

In terms of biological role, probably participates in a plant defense mechanism. In Hybanthus floribundus (Greenviolet), this protein is Cyclotide Hyfl-A.